Here is a 901-residue protein sequence, read N- to C-terminus: Protein translocase subunit SecA (901 aa).

ATP is bound by residues Gln-87, 105 to 109 (GEGKT), and Asp-512. Positions 868-901 (AALAAQTGERKVGRNDPCPCGSGKKYKQCHGRLQ) are disordered. Zn(2+)-binding residues include Cys-885, Cys-887, Cys-896, and His-897. Basic residues predominate over residues 891–901 (KKYKQCHGRLQ).

Belongs to the SecA family. As to quaternary structure, monomer and homodimer. Part of the essential Sec protein translocation apparatus which comprises SecA, SecYEG and auxiliary proteins SecDF-YajC and YidC. Requires Zn(2+) as cofactor.

Its subcellular location is the cell inner membrane. The protein resides in the cytoplasm. It carries out the reaction ATP + H2O + cellular proteinSide 1 = ADP + phosphate + cellular proteinSide 2.. Functionally, part of the Sec protein translocase complex. Interacts with the SecYEG preprotein conducting channel. Has a central role in coupling the hydrolysis of ATP to the transfer of proteins into and across the cell membrane, serving both as a receptor for the preprotein-SecB complex and as an ATP-driven molecular motor driving the stepwise translocation of polypeptide chains across the membrane. The chain is Protein translocase subunit SecA from Escherichia coli O45:K1 (strain S88 / ExPEC).